Consider the following 242-residue polypeptide: Triosephosphate isomerase (242 aa).

9–11 serves as a coordination point for substrate; sequence NWK. The active-site Electrophile is the histidine 99. Glutamate 169 acts as the Proton acceptor in catalysis. Substrate contacts are provided by residues glycine 175, serine 207, and 228 to 229; that span reads GG.

It belongs to the triosephosphate isomerase family. In terms of assembly, homodimer.

The protein resides in the cytoplasm. It catalyses the reaction D-glyceraldehyde 3-phosphate = dihydroxyacetone phosphate. It functions in the pathway carbohydrate biosynthesis; gluconeogenesis. The protein operates within carbohydrate degradation; glycolysis; D-glyceraldehyde 3-phosphate from glycerone phosphate: step 1/1. In terms of biological role, involved in the gluconeogenesis. Catalyzes stereospecifically the conversion of dihydroxyacetone phosphate (DHAP) to D-glyceraldehyde-3-phosphate (G3P). This is Triosephosphate isomerase from Mycoplasma mobile (strain ATCC 43663 / 163K / NCTC 11711) (Mesomycoplasma mobile).